Consider the following 172-residue polypeptide: uncharacterized protein (172 aa).

The signal sequence occupies residues methionine 1–glycine 22. Topologically, residues leucine 23–threonine 140 are extracellular. Residues histidine 27–serine 69 form a disordered region. Positions glycine 29–alanine 42 are enriched in basic residues. The span at serine 53–serine 69 shows a compositional bias: low complexity. N-linked (GlcNAc...) asparagine glycans are attached at residues asparagine 135 and asparagine 138. Residues isoleucine 141–isoleucine 161 traverse the membrane as a helical segment. Topologically, residues valine 162–tyrosine 172 are cytoplasmic.

Its subcellular location is the membrane. This is an uncharacterized protein from Dictyostelium discoideum (Social amoeba).